A 316-amino-acid chain; its full sequence is C1GALT1-specific chaperone 1 (316 aa).

Over 1–6 the chain is Cytoplasmic; sequence MLSESS. A helical; Signal-anchor for type II membrane protein membrane pass occupies residues 7 to 26; sequence SFLKGVMLGSIFCALITMLG. The Lumenal portion of the chain corresponds to 27 to 316; sequence HIRIGNRMHH…FLPPNGSEND (290 aa).

This sequence belongs to the glycosyltransferase 31 family. Beta3-Gal-T subfamily. As to quaternary structure, associates with core 1 beta-3-galactosyltransferase (C1GALT1), probably not with the soluble active form.

The protein resides in the membrane. Its function is as follows. Probable chaperone required for the generation of 1 O-glycan Gal-beta1-3GalNAc-alpha1-Ser/Thr (T antigen), which is a precursor for many extended O-glycans in glycoproteins. Probably acts as a specific molecular chaperone assisting the folding/stability of core 1 beta-3-galactosyltransferase (C1GALT1). The polypeptide is C1GALT1-specific chaperone 1 (C1galt1c1) (Mus musculus (Mouse)).